Here is a 379-residue protein sequence, read N- to C-terminus: Homoserine O-succinyltransferase (379 aa).

An AB hydrolase-1 domain is found at 51 to 360 (NAVLICHALS…DSPYGHDAFL (310 aa)). The Nucleophile role is filled by serine 157. Arginine 227 contributes to the substrate binding site. Residues aspartate 323 and histidine 356 contribute to the active site. A substrate-binding site is contributed by aspartate 357.

It belongs to the AB hydrolase superfamily. MetX family. As to quaternary structure, homodimer.

The protein localises to the cytoplasm. It catalyses the reaction L-homoserine + succinyl-CoA = O-succinyl-L-homoserine + CoA. It functions in the pathway amino-acid biosynthesis; L-methionine biosynthesis via de novo pathway; O-succinyl-L-homoserine from L-homoserine: step 1/1. Functionally, transfers a succinyl group from succinyl-CoA to L-homoserine, forming succinyl-L-homoserine. This is Homoserine O-succinyltransferase from Pseudomonas putida (strain ATCC 700007 / DSM 6899 / JCM 31910 / BCRC 17059 / LMG 24140 / F1).